A 145-amino-acid polypeptide reads, in one-letter code: Ribonuclease P protein component (145 aa).

Residues Pro121 to Leu145 are disordered. Residues His134–Leu145 are compositionally biased toward polar residues.

The protein belongs to the RnpA family. As to quaternary structure, consists of a catalytic RNA component (M1 or rnpB) and a protein subunit.

The enzyme catalyses Endonucleolytic cleavage of RNA, removing 5'-extranucleotides from tRNA precursor.. Its function is as follows. RNaseP catalyzes the removal of the 5'-leader sequence from pre-tRNA to produce the mature 5'-terminus. It can also cleave other RNA substrates such as 4.5S RNA. The protein component plays an auxiliary but essential role in vivo by binding to the 5'-leader sequence and broadening the substrate specificity of the ribozyme. The sequence is that of Ribonuclease P protein component from Xanthomonas axonopodis pv. citri (strain 306).